A 61-amino-acid chain; its full sequence is Lens epithelial cell protein LEP503 (61 aa).

As to expression, restricted to lens epithelial cells.

May play a role in lens epithelial cell differentiation. This is Lens epithelial cell protein LEP503 (LENEP) from Homo sapiens (Human).